A 553-amino-acid polypeptide reads, in one-letter code: Dihydroxy-acid dehydratase (553 aa).

Asp78 provides a ligand contact to Mg(2+). Cys119 is a binding site for [2Fe-2S] cluster. Asp120 and Lys121 together coordinate Mg(2+). Lys121 carries the post-translational modification N6-carboxylysine. [2Fe-2S] cluster is bound at residue Cys193. Glu441 provides a ligand contact to Mg(2+). The active-site Proton acceptor is Ser467.

Belongs to the IlvD/Edd family. Homodimer. [2Fe-2S] cluster serves as cofactor. The cofactor is Mg(2+).

It catalyses the reaction (2R)-2,3-dihydroxy-3-methylbutanoate = 3-methyl-2-oxobutanoate + H2O. The enzyme catalyses (2R,3R)-2,3-dihydroxy-3-methylpentanoate = (S)-3-methyl-2-oxopentanoate + H2O. Its pathway is amino-acid biosynthesis; L-isoleucine biosynthesis; L-isoleucine from 2-oxobutanoate: step 3/4. The protein operates within amino-acid biosynthesis; L-valine biosynthesis; L-valine from pyruvate: step 3/4. Functions in the biosynthesis of branched-chain amino acids. Catalyzes the dehydration of (2R,3R)-2,3-dihydroxy-3-methylpentanoate (2,3-dihydroxy-3-methylvalerate) into 2-oxo-3-methylpentanoate (2-oxo-3-methylvalerate) and of (2R)-2,3-dihydroxy-3-methylbutanoate (2,3-dihydroxyisovalerate) into 2-oxo-3-methylbutanoate (2-oxoisovalerate), the penultimate precursor to L-isoleucine and L-valine, respectively. This is Dihydroxy-acid dehydratase from Geotalea daltonii (strain DSM 22248 / JCM 15807 / FRC-32) (Geobacter daltonii).